The chain runs to 258 residues: Deoxyribose-phosphate aldolase (258 aa).

The active-site Proton donor/acceptor is Asp-102. The Schiff-base intermediate with acetaldehyde role is filled by Lys-165. Lys-199 acts as the Proton donor/acceptor in catalysis.

The protein belongs to the DeoC/FbaB aldolase family. DeoC type 2 subfamily.

The protein resides in the cytoplasm. It catalyses the reaction 2-deoxy-D-ribose 5-phosphate = D-glyceraldehyde 3-phosphate + acetaldehyde. Its pathway is carbohydrate degradation; 2-deoxy-D-ribose 1-phosphate degradation; D-glyceraldehyde 3-phosphate and acetaldehyde from 2-deoxy-alpha-D-ribose 1-phosphate: step 2/2. Its function is as follows. Catalyzes a reversible aldol reaction between acetaldehyde and D-glyceraldehyde 3-phosphate to generate 2-deoxy-D-ribose 5-phosphate. The sequence is that of Deoxyribose-phosphate aldolase from Aliivibrio fischeri (strain ATCC 700601 / ES114) (Vibrio fischeri).